Consider the following 110-residue polypeptide: Putative membrane protein insertion efficiency factor (110 aa).

This sequence belongs to the UPF0161 family.

It is found in the cell inner membrane. Its function is as follows. Could be involved in insertion of integral membrane proteins into the membrane. This chain is Putative membrane protein insertion efficiency factor, found in Aliarcobacter butzleri (strain RM4018) (Arcobacter butzleri).